A 256-amino-acid polypeptide reads, in one-letter code: Pimeloyl-[acyl-carrier protein] methyl ester esterase (256 aa).

The 228-residue stretch at 15 to 242 (HLVLLHGWGL…AAHAPFISHP (228 aa)) folds into the AB hydrolase-1 domain. Residues Trp-22, 82–83 (SL), and 143–147 (FLALQ) each bind substrate. Ser-82 (nucleophile) is an active-site residue. Active-site residues include Asp-207 and His-235. Residue His-235 coordinates substrate.

Belongs to the AB hydrolase superfamily. Carboxylesterase BioH family. In terms of assembly, monomer.

It is found in the cytoplasm. It catalyses the reaction 6-carboxyhexanoyl-[ACP] methyl ester + H2O = 6-carboxyhexanoyl-[ACP] + methanol + H(+). The protein operates within cofactor biosynthesis; biotin biosynthesis. Its function is as follows. The physiological role of BioH is to remove the methyl group introduced by BioC when the pimeloyl moiety is complete. It allows to synthesize pimeloyl-ACP via the fatty acid synthetic pathway through the hydrolysis of the ester bonds of pimeloyl-ACP esters. In Escherichia coli O81 (strain ED1a), this protein is Pimeloyl-[acyl-carrier protein] methyl ester esterase.